The primary structure comprises 322 residues: Replication-associated protein G2P (322 aa).

Belongs to the inovirus G2P protein family.

The enzyme catalyses ATP + (deoxyribonucleotide)n-3'-hydroxyl + 5'-phospho-(deoxyribonucleotide)m = (deoxyribonucleotide)n+m + AMP + diphosphate.. Isoform G2P plays an essential role in viral DNA replication. Binds the origin of replication and cleaves the dsDNA replicative form I (RFI) and becomes covalently bound to it via phosphotyrosine bond, generating the dsDNA replicative form II (RFII). In turn, viral DNA replication initiates at the 3'-OH of the cleavage site. After one round of rolling circle synthesis, protein G2P is linked to the newly synthesized ssDNA and joins the ends of the displaced strand to generate a circular single-stranded molecule ready to be packed into a virion. In terms of biological role, isoform G10P protein binds to double-stranded DNA and prevents hydrolysis by nucleases. Additionally, G10P is an inhibitor of DNA replication and may have a role in the transition from semiconservative replicative form DNA replication to single-stranded DNA synthesis in the life cycle. The protein is Replication-associated protein G2P (II) of Escherichia phage If1 (Bacteriophage If1).